Consider the following 66-residue polypeptide: Large ribosomal subunit protein bL35 (66 aa).

It belongs to the bacterial ribosomal protein bL35 family.

The chain is Large ribosomal subunit protein bL35 from Rhodopseudomonas palustris (strain BisB18).